The sequence spans 1184 residues: DNA-directed RNA polymerase subunit beta' (1184 aa).

Zn(2+) contacts are provided by cysteine 60, cysteine 62, cysteine 75, and cysteine 78. Aspartate 449, aspartate 451, and aspartate 453 together coordinate Mg(2+). Zn(2+) is bound by residues cysteine 794, cysteine 867, cysteine 874, and cysteine 877. The segment at 1165–1184 (NDQQERQDKEKEETEVKASN) is disordered.

This sequence belongs to the RNA polymerase beta' chain family. The RNAP catalytic core consists of 2 alpha, 1 beta, 1 beta' and 1 omega subunit. When a sigma factor is associated with the core the holoenzyme is formed, which can initiate transcription. The cofactor is Mg(2+). Requires Zn(2+) as cofactor.

The enzyme catalyses RNA(n) + a ribonucleoside 5'-triphosphate = RNA(n+1) + diphosphate. DNA-dependent RNA polymerase catalyzes the transcription of DNA into RNA using the four ribonucleoside triphosphates as substrates. The sequence is that of DNA-directed RNA polymerase subunit beta' from Thermoanaerobacter pseudethanolicus (strain ATCC 33223 / 39E) (Clostridium thermohydrosulfuricum).